The primary structure comprises 696 residues: D-(-)-3-hydroxybutyrate oligomer hydrolase (696 aa).

The N-terminal stretch at 1-20 (MTRLGWGRRMVFGAALAAVA) is a signal peptide. The Charge relay system role is filled by serine 309.

This sequence belongs to the D-(-)-3-hydroxybutyrate oligomer hydrolase family.

The protein localises to the secreted. The catalysed reaction is (3R)-hydroxybutanoate dimer + H2O = 2 (R)-3-hydroxybutanoate + H(+). It functions in the pathway lipid metabolism; butanoate metabolism. In terms of biological role, participates in the degradation of poly-3-hydroxybutyrate (PHB). It works downstream of poly(3-hydroxybutyrate) depolymerase, hydrolyzing D(-)-3-hydroxybutyrate oligomers of various length (3HB-oligomers) into 3HB-monomers. In Burkholderia lata (strain ATCC 17760 / DSM 23089 / LMG 22485 / NCIMB 9086 / R18194 / 383), this protein is D-(-)-3-hydroxybutyrate oligomer hydrolase.